The following is a 749-amino-acid chain: Protein lin-54 homolog (749 aa).

A Glycyl lysine isopeptide (Lys-Gly) (interchain with G-Cter in SUMO2) cross-link involves residue lysine 139. 2 positions are modified to N6-acetyllysine: lysine 244 and lysine 249. Phosphoserine is present on residues serine 264, serine 282, serine 310, and serine 314. Residue lysine 357 forms a Glycyl lysine isopeptide (Lys-Gly) (interchain with G-Cter in SUMO2) linkage. Residues 521 to 634 (PRKPCNCTKS…KCIGCKNFEE (114 aa)) enclose the CRC domain. Positions 523–536 (KPCNCTKSLCLKLY) are DNA-binding. Residues cysteine 525, cysteine 527, cysteine 532, cysteine 537, cysteine 539, cysteine 546, cysteine 549, cysteine 551, and cysteine 554 each contribute to the Zn(2+) site. Positions 583 to 596 (IGKGKEGESDRRHS) are linker. Residues cysteine 599, cysteine 601, cysteine 606, cysteine 611, cysteine 613, cysteine 620, cysteine 624, cysteine 626, and cysteine 629 each coordinate Zn(2+). Residues 599-612 (CNCKRSGCLKNYCE) form a DNA-binding region. Position 635 is a phosphoserine (serine 635). Glycyl lysine isopeptide (Lys-Gly) (interchain with G-Cter in SUMO2) cross-links involve residues lysine 639, lysine 659, and lysine 661.

This sequence belongs to the lin-54 family. Component of the DREAM complex (also named LINC complex) at least composed of E2F4, E2F5, LIN9, LIN37, LIN52, LIN54, MYBL1, MYBL2, RBL1, RBL2, RBBP4, RBL2, TFDP1 and TFDP2. The complex exists in quiescent cells where it represses cell cycle-dependent genes. It dissociates in S phase when LIN9, LIN37, LIN52 and LIN54 form a subcomplex that binds to MYBL2.

It localises to the nucleus. Component of the DREAM complex, a multiprotein complex that can both act as a transcription activator or repressor depending on the context. In G0 phase, the complex binds to more than 800 promoters and is required for repression of E2F target genes. In S phase, the complex selectively binds to the promoters of G2/M genes whose products are required for mitosis and participates in their cell cycle dependent activation. In the complex, acts as a DNA-binding protein that binds the promoter of CDK1 in a sequence-specific manner. Specifically recognizes the consensus motif 5'-TTYRAA-3' in target DNA. In Rattus norvegicus (Rat), this protein is Protein lin-54 homolog (Lin54).